Here is a 592-residue protein sequence, read N- to C-terminus: Arginine--tRNA ligase (592 aa).

The short motif at 131–141 is the 'HIGH' region element; it reads ANPTGPMHVGH.

The protein belongs to the class-I aminoacyl-tRNA synthetase family. Monomer.

The protein localises to the cytoplasm. The catalysed reaction is tRNA(Arg) + L-arginine + ATP = L-arginyl-tRNA(Arg) + AMP + diphosphate. In Rhodospirillum rubrum (strain ATCC 11170 / ATH 1.1.1 / DSM 467 / LMG 4362 / NCIMB 8255 / S1), this protein is Arginine--tRNA ligase.